The following is a 214-amino-acid chain: Probable nicotinate-nucleotide adenylyltransferase (214 aa).

The protein belongs to the NadD family.

The catalysed reaction is nicotinate beta-D-ribonucleotide + ATP + H(+) = deamido-NAD(+) + diphosphate. It functions in the pathway cofactor biosynthesis; NAD(+) biosynthesis; deamido-NAD(+) from nicotinate D-ribonucleotide: step 1/1. In terms of biological role, catalyzes the reversible adenylation of nicotinate mononucleotide (NaMN) to nicotinic acid adenine dinucleotide (NaAD). This is Probable nicotinate-nucleotide adenylyltransferase from Pseudomonas aeruginosa (strain UCBPP-PA14).